We begin with the raw amino-acid sequence, 319 residues long: Acetyl-coenzyme A carboxylase carboxyl transferase subunit alpha (319 aa).

A CoA carboxyltransferase C-terminal domain is found at 32 to 293 (NVDTEVRALE…KAVLLNELEA (262 aa)).

The protein belongs to the AccA family. As to quaternary structure, acetyl-CoA carboxylase is a heterohexamer composed of biotin carboxyl carrier protein (AccB), biotin carboxylase (AccC) and two subunits each of ACCase subunit alpha (AccA) and ACCase subunit beta (AccD).

The protein localises to the cytoplasm. The catalysed reaction is N(6)-carboxybiotinyl-L-lysyl-[protein] + acetyl-CoA = N(6)-biotinyl-L-lysyl-[protein] + malonyl-CoA. The protein operates within lipid metabolism; malonyl-CoA biosynthesis; malonyl-CoA from acetyl-CoA: step 1/1. In terms of biological role, component of the acetyl coenzyme A carboxylase (ACC) complex. First, biotin carboxylase catalyzes the carboxylation of biotin on its carrier protein (BCCP) and then the CO(2) group is transferred by the carboxyltransferase to acetyl-CoA to form malonyl-CoA. The chain is Acetyl-coenzyme A carboxylase carboxyl transferase subunit alpha from Xylella fastidiosa (strain M12).